The primary structure comprises 243 residues: Ubiquinone/menaquinone biosynthesis C-methyltransferase UbiE (243 aa).

S-adenosyl-L-methionine contacts are provided by residues Thr69, Asp90, and 116 to 117 (DA).

The protein belongs to the class I-like SAM-binding methyltransferase superfamily. MenG/UbiE family.

It carries out the reaction a 2-demethylmenaquinol + S-adenosyl-L-methionine = a menaquinol + S-adenosyl-L-homocysteine + H(+). The catalysed reaction is a 2-methoxy-6-(all-trans-polyprenyl)benzene-1,4-diol + S-adenosyl-L-methionine = a 5-methoxy-2-methyl-3-(all-trans-polyprenyl)benzene-1,4-diol + S-adenosyl-L-homocysteine + H(+). The protein operates within quinol/quinone metabolism; menaquinone biosynthesis; menaquinol from 1,4-dihydroxy-2-naphthoate: step 2/2. It participates in cofactor biosynthesis; ubiquinone biosynthesis. Methyltransferase required for the conversion of demethylmenaquinol (DMKH2) to menaquinol (MKH2) and the conversion of 2-polyprenyl-6-methoxy-1,4-benzoquinol (DDMQH2) to 2-polyprenyl-3-methyl-6-methoxy-1,4-benzoquinol (DMQH2). This Cupriavidus pinatubonensis (strain JMP 134 / LMG 1197) (Cupriavidus necator (strain JMP 134)) protein is Ubiquinone/menaquinone biosynthesis C-methyltransferase UbiE.